A 571-amino-acid polypeptide reads, in one-letter code: Streptolysin O (571 aa).

A signal peptide spans 1 to 33; sequence MSNKKTFKKYSRVAGLLTAALIIGNLVTANAES. The interval 30–108 is disordered; the sequence is NAESNKQNTA…KKSEEDHTEE (79 aa). Over residues 37–48 the composition is skewed to low complexity; that stretch reads NTASTETTTTNE. Composition is skewed to basic and acidic residues over residues 50–68 and 79–108; these read PKPE…KTDD and APKE…HTEE. A run of 4 beta stranded transmembrane segments spans residues 260 to 273, 280 to 289, 358 to 367, and 375 to 387; these read KSQI…NSKI, IDFKSISKGE, SNDVEAAFSA, and KTNG…LENS. The Conserved undecapeptide signature appears at 529–539; the sequence is ECTGLAWEWWR. Positions 561-562 match the Cholesterol binding motif; that stretch reads TL.

It belongs to the cholesterol-dependent cytolysin family. As to quaternary structure, homooligomeric pore complex of 35 to 50 subunits; when inserted in the host membrane.

The protein resides in the secreted. It localises to the host cell membrane. Its function is as follows. A cholesterol-dependent toxin that causes cytolysis by forming pores in cholesterol containing host membranes. After binding to target membranes, the protein undergoes a major conformation change, leading to its insertion in the host membrane and formation of an oligomeric pore complex. Cholesterol is required for binding to host membranes, membrane insertion and pore formation; cholesterol binding is mediated by a Thr-Leu pair in the C-terminus. Can be reversibly inactivated by oxidation. In Streptococcus pyogenes serotype M3 (strain ATCC BAA-595 / MGAS315), this protein is Streptolysin O (slo).